Here is a 234-residue protein sequence, read N- to C-terminus: Small ribosomal subunit protein uS3 (234 aa).

A KH type-2 domain is found at I39 to K109.

It belongs to the universal ribosomal protein uS3 family. Part of the 30S ribosomal subunit. Forms a tight complex with proteins S10 and S14.

Binds the lower part of the 30S subunit head. Binds mRNA in the 70S ribosome, positioning it for translation. This is Small ribosomal subunit protein uS3 from Coprothermobacter proteolyticus (strain ATCC 35245 / DSM 5265 / OCM 4 / BT).